Consider the following 600-residue polypeptide: Pyranose dehydrogenase 2 (600 aa).

Positions 1 to 25 are cleaved as a signal peptide; that stretch reads MLSRVAKLNSRLVSLALLGSQIAFG. 2 N-linked (GlcNAc...) asparagine glycosylation sites follow: asparagine 99 and asparagine 114. Tele-8alpha-FAD histidine is present on histidine 127. N-linked (GlcNAc...) asparagine glycosylation is found at asparagine 199, asparagine 275, and asparagine 342. Histidine 535 functions as the Proton acceptor in the catalytic mechanism. Histidine 579 is a catalytic residue.

This sequence belongs to the GMC oxidoreductase family. Monomer. It depends on FAD as a cofactor. Post-translationally, N-glycosylated.

It localises to the secreted. It carries out the reaction pyranose + acceptor = pyranos-2-ulose + reduced acceptor.. It catalyses the reaction pyranose + acceptor = pyranos-3-ulose + reduced acceptor.. The enzyme catalyses pyranose + acceptor = pyranos-2,3-diulose + reduced acceptor.. The catalysed reaction is a pyranoside + acceptor = a pyranosid-3-ulose + reduced acceptor.. It carries out the reaction a pyranoside + acceptor = a pyranosid-3,4-diulose + reduced acceptor.. Its function is as follows. Catalyzes the single-oxidation or sequential double oxidation reaction of carbohydrates primarily at carbon-2 and/or carbon-3 with the concomitant reduction of the flavin. The enzyme exhibits a broad sugar substrate specificity, oxidizing different aldopyranoses to the corresponding C-1, C-2, C-3 or C-1,2, C-2,3 and C-3,4 (di)dehydro sugars with substrate-specific regioselectivity. Accepts only a narrow range of electron acceptors such as substituted benzoquinones and complexed metal ions and reacts extremely slowly with O(2) as acceptor. May play a role in the natural recycling of plant matter by oxidizing all major monosaccharides in lignocellulose and by reducing quinone compounds or reactive radical species generated during lignin depolymerization. The polypeptide is Pyranose dehydrogenase 2 (Leucoagaricus meleagris (Western flat-topped agaric)).